Here is a 1750-residue protein sequence, read N- to C-terminus: Protein TIC 214 (1750 aa).

A run of 6 helical transmembrane segments spans residues 12 to 32 (KIINSVIVVGLYYGFMTALSI), 69 to 89 (FIMGQFIRLISIYYGPLYVAL), 97 to 117 (ILALPYLLIHLFWNTDKSFFA), 129 to 149 (LEIYCVFLNHFALQLLNSCIL), 177 to 197 (FAWFIGQLFILNCFELVLVWI), and 216 to 236 (IFVIFLNCIFGSLLFLLSIQC). Residues 260-277 (RERLQKEEERGVEKKEQS) are compositionally biased toward basic and acidic residues. Disordered stretches follow at residues 260-282 (RERLQKEEERGVEKKEQSTEEDP), 617-638 (ATTTNSKTNTTKDTNLETKKES), 718-738 (STDKKRGKTKKEEKRENKQRE), 1205-1225 (RNSRGNYRLSDSKKQNVPKPV), and 1419-1512 (ETDS…NKKE). Residues 617 to 629 (ATTTNSKTNTTKD) are compositionally biased toward low complexity. Residues 727–738 (KKEEKRENKQRE) are compositionally biased toward basic and acidic residues. The span at 1420-1512 (TDSKQKSETD…TKSDKKNKKE (93 aa)) shows a compositional bias: basic and acidic residues.

Belongs to the TIC214 family. Part of the Tic complex.

Its subcellular location is the plastid. The protein resides in the chloroplast inner membrane. Its function is as follows. Involved in protein precursor import into chloroplasts. May be part of an intermediate translocation complex acting as a protein-conducting channel at the inner envelope. The sequence is that of Protein TIC 214 from Cuscuta reflexa (Southern Asian dodder).